The sequence spans 487 residues: E3 ubiquitin-protein ligase RNF8 (487 aa).

Residues 38–92 (VTIGRGFSVTYQLISKVCPLMISRNHCVLKQNPEGQWTIMDNKSLNGVWLNRERL) form the FHA domain. Positions 68-72 (QNPEG) are required for interaction with PIWIL1. Residues 135–195 (CLAPKNDHTT…PEKLHGKGEA (61 aa)) form a disordered region. Ser-157 is modified (phosphoserine). A compositionally biased stretch (basic and acidic residues) spans 184–193 (AEPEKLHGKG). The RING-type zinc-finger motif lies at 405–443 (CIICSEYFIEAVTLNCAHSFCSFCISEWMKRKVECPICR).

Belongs to the RNF8 family. Homodimer. Forms a E2-E3 ubiquitin ligase complex composed of the RNF8 homodimer and a E2 heterodimer of UBE2N and UBE2V2. Interacts with class III E2s, including UBE2E1, UBE2E2, and UBE2E3 and with UBE2N. Interacts with RXRA. Interacts (via FHA domain) with phosphorylated HERC2 (via C-terminus). Interacts with PIWIL1; leading to sequester RNF8 in the cytoplasm. Interacts with WRAP53/TCAB1. In terms of processing, autoubiquitinated through 'Lys-48' and 'Lys-63' of ubiquitin. 'Lys-63' polyubiquitination is mediated by UBE2N. 'Lys-29'-type polyubiquitination is also observed, but it doesn't require its own functional RING-type zinc finger.

The protein localises to the nucleus. The protein resides in the cytoplasm. It localises to the midbody. Its subcellular location is the chromosome. It is found in the telomere. It catalyses the reaction S-ubiquitinyl-[E2 ubiquitin-conjugating enzyme]-L-cysteine + [acceptor protein]-L-lysine = [E2 ubiquitin-conjugating enzyme]-L-cysteine + N(6)-ubiquitinyl-[acceptor protein]-L-lysine.. The protein operates within protein modification; protein ubiquitination. Its function is as follows. E3 ubiquitin-protein ligase that plays a key role in DNA damage signaling via 2 distinct roles: by mediating the 'Lys-63'-linked ubiquitination of histones H2A and H2AX and promoting the recruitment of DNA repair proteins at double-strand breaks (DSBs) sites, and by catalyzing 'Lys-48'-linked ubiquitination to remove target proteins from DNA damage sites. Following DNA DSBs, it is recruited to the sites of damage by ATM-phosphorylated MDC1 and catalyzes the 'Lys-63'-linked ubiquitination of histones H2A and H2AX, thereby promoting the formation of TP53BP1 and BRCA1 ionizing radiation-induced foci (IRIF). Also controls the recruitment of UIMC1-BRCC3 (RAP80-BRCC36) and PAXIP1/PTIP to DNA damage sites. Promotes the recruitment of NBN to DNA damage sites by catalyzing 'Lys-6'-linked ubiquitination of NBN. Also recruited at DNA interstrand cross-links (ICLs) sites and catalyzes 'Lys-63'-linked ubiquitination of histones H2A and H2AX, leading to recruitment of FAAP20 and Fanconi anemia (FA) complex, followed by interstrand cross-link repair. H2A ubiquitination also mediates the ATM-dependent transcriptional silencing at regions flanking DSBs in cis, a mechanism to avoid collision between transcription and repair intermediates. Promotes the formation of 'Lys-63'-linked polyubiquitin chains via interactions with the specific ubiquitin-conjugating UBE2N/UBC13 and ubiquitinates non-histone substrates such as PCNA. Substrates that are polyubiquitinated at 'Lys-63' are usually not targeted for degradation. Also catalyzes the formation of 'Lys-48'-linked polyubiquitin chains via interaction with the ubiquitin-conjugating UBE2L6/UBCH8, leading to degradation of substrate proteins such as CHEK2, JMJD2A/KDM4A and KU80/XRCC5: it is still unclear how the preference toward 'Lys-48'- versus 'Lys-63'-linked ubiquitination is regulated but it could be due to RNF8 ability to interact with specific E2 specific ligases. For instance, interaction with phosphorylated HERC2 promotes the association between RNF8 and UBE2N/UBC13 and favors the specific formation of 'Lys-63'-linked ubiquitin chains. Promotes non-homologous end joining (NHEJ) by promoting the 'Lys-48'-linked ubiquitination and degradation the of KU80/XRCC5. Following DNA damage, mediates the ubiquitination and degradation of JMJD2A/KDM4A in collaboration with RNF168, leading to unmask H4K20me2 mark and promote the recruitment of TP53BP1 at DNA damage sites. Following DNA damage, mediates the ubiquitination and degradation of POLD4/p12, a subunit of DNA polymerase delta. In the absence of POLD4, DNA polymerase delta complex exhibits higher proofreading activity. In addition to its function in damage signaling, also plays a role in higher-order chromatin structure by mediating extensive chromatin decondensation. Involved in the activation of ATM by promoting histone H2B ubiquitination, which indirectly triggers histone H4 'Lys-16' acetylation (H4K16ac), establishing a chromatin environment that promotes efficient activation of ATM kinase. Required in the testis, where it plays a role in the replacement of histones during spermatogenesis. At uncapped telomeres, promotes the joining of deprotected chromosome ends by inducing H2A ubiquitination and TP53BP1 recruitment, suggesting that it may enhance cancer development by aggravating telomere-induced genome instability in case of telomeric crisis. Promotes the assembly of RAD51 at DNA DSBs in the absence of BRCA1 and TP53BP1 Also involved in class switch recombination in immune system, via its role in regulation of DSBs repair. May be required for proper exit from mitosis after spindle checkpoint activation and may regulate cytokinesis. May play a role in the regulation of RXRA-mediated transcriptional activity. Not involved in RXRA ubiquitination by UBE2E2. This chain is E3 ubiquitin-protein ligase RNF8, found in Rattus norvegicus (Rat).